A 340-amino-acid chain; its full sequence is Spermidine synthase 2 (340 aa).

The disordered stretch occupies residues 1–41 (MSSTQEASVTDLPVKRPREAEEDNNGGAMETENGGGEIKEP). N-acetylserine is present on serine 2. The PABS domain occupies 49-286 (PGWFSEISPM…GVIGFMLCSS (238 aa)). Position 80 (glutamine 80) interacts with S-adenosyl 3-(methylsulfanyl)propylamine. Residue tyrosine 110 participates in putrescine binding. S-adenosyl 3-(methylsulfanyl)propylamine contacts are provided by residues glutamine 111, aspartate 135, glutamate 155, 186-187 (DG), and aspartate 205. The active-site Proton acceptor is the aspartate 205. Residues 205–208 (DSSD) and tyrosine 274 each bind putrescine.

The protein belongs to the spermidine/spermine synthase family. As to quaternary structure, heterodimer. Component of a multiprotein complex. Interacts with SPMS and SPDSYN1.

The enzyme catalyses S-adenosyl 3-(methylsulfanyl)propylamine + putrescine = S-methyl-5'-thioadenosine + spermidine + H(+). Its pathway is amine and polyamine biosynthesis; spermidine biosynthesis; spermidine from putrescine: step 1/1. The chain is Spermidine synthase 2 (SPDSYN2) from Arabidopsis thaliana (Mouse-ear cress).